Reading from the N-terminus, the 446-residue chain is Glutamine synthetase (446 aa).

A GS beta-grasp domain is found at 18-103; it reads ENVRYLRLQF…LICDVFKTDG (86 aa). In terms of domain architecture, GS catalytic spans 110 to 446; sequence PRANLKRVLR…WEREQYIKQY (337 aa). Residues glutamate 134 and glutamate 136 each contribute to the Mg(2+) site. Glutamate 186 is an ATP binding site. Glutamate 191 and glutamate 198 together coordinate Mg(2+). Residues 242-243 and glycine 243 each bind L-glutamate; that span reads NG. Histidine 247 is a binding site for Mg(2+). An ATP-binding site is contributed by serine 251. Positions 300, 306, and 318 each coordinate L-glutamate. ATP is bound by residues arginine 318 and arginine 323. A Mg(2+)-binding site is contributed by glutamate 335. L-glutamate is bound at residue arginine 337.

It belongs to the glutamine synthetase family. In terms of assembly, oligomer of 12 subunits arranged in the form of two hexagons. In its feedback-inhibited form, interacts with TnrA in order to block its DNA-binding activity. Mg(2+) serves as cofactor.

The protein resides in the cytoplasm. The enzyme catalyses L-glutamate + NH4(+) + ATP = L-glutamine + ADP + phosphate + H(+). With respect to regulation, inhibited by glutamine. Its function is as follows. Glutamine synthetase (GS) is an unusual multitasking protein that functions as an enzyme, a transcription coregulator, and a chaperone in ammonium assimilation and in the regulation of genes involved in nitrogen metabolism. It catalyzes the ATP-dependent biosynthesis of glutamine from glutamate and ammonia. Feedback-inhibited GlnA also interacts with and regulates the activity of the transcriptional regulator TnrA. During nitrogen limitation, TnrA is in its DNA-binding active state and turns on the transcription of genes required for nitrogen assimilation. Under conditions of nitrogen excess, feedback-inhibited GlnA forms a stable complex with TnrA, which inhibits its DNA-binding activity. In contrast, feedback-inhibited GlnA acts as a chaperone to stabilize the DNA-binding activity of GlnR, which represses the transcription of nitrogen assimilation genes. The polypeptide is Glutamine synthetase (Staphylococcus epidermidis (strain ATCC 35984 / DSM 28319 / BCRC 17069 / CCUG 31568 / BM 3577 / RP62A)).